Here is a 115-residue protein sequence, read N- to C-terminus: Large ribosomal subunit protein bL19 (115 aa).

This sequence belongs to the bacterial ribosomal protein bL19 family.

This protein is located at the 30S-50S ribosomal subunit interface and may play a role in the structure and function of the aminoacyl-tRNA binding site. The sequence is that of Large ribosomal subunit protein bL19 from Streptococcus pyogenes serotype M1.